Consider the following 257-residue polypeptide: Phosphate import ATP-binding protein PstB (257 aa).

The region spanning 4 to 246 is the ABC transporter domain; it reads LKLNDVNIYY…KKIFENPDQK (243 aa). 36 to 43 contacts ATP; that stretch reads GPSGCGKS.

The protein belongs to the ABC transporter superfamily. Phosphate importer (TC 3.A.1.7) family. As to quaternary structure, the complex is composed of two ATP-binding proteins (PstB), two transmembrane proteins (PstC and PstA) and a solute-binding protein (PstS).

It localises to the cell membrane. The enzyme catalyses phosphate(out) + ATP + H2O = ADP + 2 phosphate(in) + H(+). Its function is as follows. Part of the ABC transporter complex PstSACB involved in phosphate import. Responsible for energy coupling to the transport system. The polypeptide is Phosphate import ATP-binding protein PstB (Corynebacterium glutamicum (strain ATCC 13032 / DSM 20300 / JCM 1318 / BCRC 11384 / CCUG 27702 / LMG 3730 / NBRC 12168 / NCIMB 10025 / NRRL B-2784 / 534)).